We begin with the raw amino-acid sequence, 175 residues long: Protein MODIFYING WALL LIGNIN-1 (175 aa).

The first 24 residues, 1–24, serve as a signal peptide directing secretion; the sequence is MFIFLFGLAAFFLCLSAEFQKAKA. The Cytoplasmic segment spans residues 25 to 52; that stretch reads LLRAQVFLKGKDLKWDGESCYLPENRAF. Residues 53-73 form a helical membrane-spanning segment; sequence GLGIAALVCVSVAQIVGNVVI. The Extracellular segment spans residues 74-86; sequence CRGFTKTDKTRTT. A helical membrane pass occupies residues 87 to 107; the sequence is IFCIILLLFSWVNFAVAVTLI. Residues 108 to 135 lie on the Cytoplasmic side of the membrane; the sequence is SVGASMNREQIYGKGWLNRECYLVKDGV. The chain crosses the membrane as a helical span at residues 136–156; it reads FAASGFLSVTTMAAILGAFAF. Topologically, residues 157–175 are extracellular; it reads KVKPSLQVENHDKRHTQNV.

Belongs to the DESIGUAL family. Interacts with CRK19.

The protein resides in the cell membrane. Its function is as follows. Together with MWL2, contributes to secondary cell wall biology, specifically lignin biosynthesis. This Arabidopsis thaliana (Mouse-ear cress) protein is Protein MODIFYING WALL LIGNIN-1.